The primary structure comprises 216 residues: Probable nicotinate-nucleotide adenylyltransferase (216 aa).

It belongs to the NadD family.

It carries out the reaction nicotinate beta-D-ribonucleotide + ATP + H(+) = deamido-NAD(+) + diphosphate. It participates in cofactor biosynthesis; NAD(+) biosynthesis; deamido-NAD(+) from nicotinate D-ribonucleotide: step 1/1. In terms of biological role, catalyzes the reversible adenylation of nicotinate mononucleotide (NaMN) to nicotinic acid adenine dinucleotide (NaAD). The chain is Probable nicotinate-nucleotide adenylyltransferase from Geobacter metallireducens (strain ATCC 53774 / DSM 7210 / GS-15).